Consider the following 196-residue polypeptide: GTP cyclohydrolase 1 (196 aa).

Zn(2+)-binding residues include Cys85, His88, and Cys158.

Belongs to the GTP cyclohydrolase I family. As to quaternary structure, homomer.

It carries out the reaction GTP + H2O = 7,8-dihydroneopterin 3'-triphosphate + formate + H(+). Its pathway is cofactor biosynthesis; 7,8-dihydroneopterin triphosphate biosynthesis; 7,8-dihydroneopterin triphosphate from GTP: step 1/1. This Corynebacterium aurimucosum (strain ATCC 700975 / DSM 44827 / CIP 107346 / CN-1) (Corynebacterium nigricans) protein is GTP cyclohydrolase 1.